The primary structure comprises 408 residues: NADH-quinone oxidoreductase subunit D (408 aa).

The protein belongs to the complex I 49 kDa subunit family. NDH-1 is composed of 14 different subunits. Subunits NuoB, C, D, E, F, and G constitute the peripheral sector of the complex.

Its subcellular location is the cell inner membrane. The enzyme catalyses a quinone + NADH + 5 H(+)(in) = a quinol + NAD(+) + 4 H(+)(out). Its function is as follows. NDH-1 shuttles electrons from NADH, via FMN and iron-sulfur (Fe-S) centers, to quinones in the respiratory chain. The immediate electron acceptor for the enzyme in this species is believed to be ubiquinone. Couples the redox reaction to proton translocation (for every two electrons transferred, four hydrogen ions are translocated across the cytoplasmic membrane), and thus conserves the redox energy in a proton gradient. In Wolinella succinogenes (strain ATCC 29543 / DSM 1740 / CCUG 13145 / JCM 31913 / LMG 7466 / NCTC 11488 / FDC 602W) (Vibrio succinogenes), this protein is NADH-quinone oxidoreductase subunit D.